We begin with the raw amino-acid sequence, 316 residues long: Phosducin-like protein 1 (316 aa).

The tract at residues 1–61 is disordered; it reads MEQNILNSIL…EDGDKEYEVD (61 aa). Over residues 12 to 41 the composition is skewed to basic and acidic residues; the sequence is KFGDGDQERSDIRHNDSGDENDNHSDHEGN. Positions 49–61 are enriched in acidic residues; the sequence is EGNEDGDKEYEVD. Residues 95–290 enclose the Phosducin domain; the sequence is SDYAEHREKQ…LLSSYDIIPN (196 aa). Positions 102-156 form a coiled coil; sequence EKQKQKYLQKKYETQKMLEKMCFTTRDQPPPTEEENQLDSDDDDLERIRKARMEQ. Positions 175-316 are thioredoxin fold; sequence FGYFKQIDSS…RPESDDDNDD (142 aa). A disordered region spans residues 293–316; the sequence is KAKNSNWETSLSRKRPESDDDNDD.

It belongs to the phosducin family.

Its subcellular location is the cytoplasm. Functionally, required for normal chemotaxis in response to cAMP and folate. Required for the heterodimerization of the G protein beta and gamma subunits gpbA and gpgA, which is itself thought to be necessary for prenylation of the gamma subunit gpgA and its association with plasma membranes. The sequence is that of Phosducin-like protein 1 (phlp1) from Dictyostelium discoideum (Social amoeba).